The sequence spans 368 residues: tRNA/tmRNA (uracil-C(5))-methyltransferase (368 aa).

Q190, Y218, N223, E239, and D301 together coordinate S-adenosyl-L-methionine. The Nucleophile role is filled by C326. The Proton acceptor role is filled by E360.

Belongs to the class I-like SAM-binding methyltransferase superfamily. RNA M5U methyltransferase family. TrmA subfamily.

It catalyses the reaction uridine(54) in tRNA + S-adenosyl-L-methionine = 5-methyluridine(54) in tRNA + S-adenosyl-L-homocysteine + H(+). The enzyme catalyses uridine(341) in tmRNA + S-adenosyl-L-methionine = 5-methyluridine(341) in tmRNA + S-adenosyl-L-homocysteine + H(+). In terms of biological role, dual-specificity methyltransferase that catalyzes the formation of 5-methyluridine at position 54 (m5U54) in all tRNAs, and that of position 341 (m5U341) in tmRNA (transfer-mRNA). In Aliivibrio fischeri (strain MJ11) (Vibrio fischeri), this protein is tRNA/tmRNA (uracil-C(5))-methyltransferase.